Here is a 268-residue protein sequence, read N- to C-terminus: MVETLLEVRNLSKTFRYRTGWFRRQTVDAVKPLSFTLRERQTLAIIGENGSGKSTLAKMLAGMIEPTSGELLIDDHPLHYGDYSFRSQRIRMIFQDPSTSLNPRQRISQILDFPLRLNTDLEPEQRRKQIVETMRMVGLLPDHVSYYPHMLAPGQKQRLGLARALILRPKVIIADEALASLDMSMRSQLINLMLELQEKQGISYIYVTQHIGMMKHISDQVLVMHQGEVVERGSTADVLASPLHELTRRLIAGHFGEALTADAWRKDR.

The ABC transporter domain maps to 6 to 251 (LEVRNLSKTF…PLHELTRRLI (246 aa)). 47 to 54 (GENGSGKS) contacts ATP.

The protein belongs to the ABC transporter superfamily.

The protein localises to the cell inner membrane. In terms of biological role, involved in a peptide intake transport system that plays a role in the resistance to antimicrobial peptides. The chain is Peptide transport system ATP-binding protein SapF from Salmonella typhimurium (strain LT2 / SGSC1412 / ATCC 700720).